Consider the following 359-residue polypeptide: Membrane-bound lytic murein transglycosylase C (359 aa).

An N-terminal signal peptide occupies residues 1–16 (MKKYLALALIAPLLIS). Residue cysteine 17 is the site of N-palmitoyl cysteine attachment. Cysteine 17 carries S-diacylglycerol cysteine lipidation.

This sequence belongs to the transglycosylase Slt family.

The protein resides in the cell outer membrane. It carries out the reaction Exolytic cleavage of the (1-&gt;4)-beta-glycosidic linkage between N-acetylmuramic acid (MurNAc) and N-acetylglucosamine (GlcNAc) residues in peptidoglycan, from either the reducing or the non-reducing ends of the peptidoglycan chains, with concomitant formation of a 1,6-anhydrobond in the MurNAc residue.. In terms of biological role, murein-degrading enzyme. May play a role in recycling of muropeptides during cell elongation and/or cell division. In Escherichia coli (strain SMS-3-5 / SECEC), this protein is Membrane-bound lytic murein transglycosylase C.